The sequence spans 467 residues: Sexual differentiation process putative subtilase-type proteinase isp6 (467 aa).

The Inhibitor I9 domain occupies Tyr-86–Ile-176. In terms of domain architecture, Peptidase S8 spans Pro-186–Glu-467. Residues Asp-221, His-253, and Ser-409 each act as charge relay system in the active site.

This sequence belongs to the peptidase S8 family.

The chain is Sexual differentiation process putative subtilase-type proteinase isp6 (isp6) from Schizosaccharomyces pombe (strain 972 / ATCC 24843) (Fission yeast).